Reading from the N-terminus, the 315-residue chain is DDRGK domain-containing protein 1 (315 aa).

The chain crosses the membrane as a helical span at residues Met-1–Ala-28. Residues Met-1–Thr-115 form a mediates interaction with CDK5RAP3 region. Residues Ala-29 to Ala-315 lie on the Cytoplasmic side of the membrane. The segment at Ala-30–Arg-184 is disordered. A compositionally biased stretch (basic and acidic residues) spans Glu-34–Ala-43. Position 73 is a phosphoserine (Ser-73). A mediates interaction with TRIP4 region spans residues Gly-119 to Leu-217. Residues Lys-125–Arg-184 are compositionally biased toward basic and acidic residues. The UFM1-interacting motif (UFIM) signature appears at Ala-196 to Glu-210. The interval Leu-217 to Ala-315 is mediates interaction with UFL1. In terms of domain architecture, PCI spans Val-230–Pro-274. Lys-268 participates in a covalent cross-link: Glycyl lysine isopeptide (Lys-Gly) (interchain with G-Cter in UFM1).

It belongs to the DDRGK1 family. Component of the UFM1 ribosome E3 ligase (UREL) complex, composed of UFL1, DDRGK1 and CDK5RAP3. Interacts with (unphosphorylated) ERN1/IRE1-alpha; interaction is dependent on UFM1 and takes place in response to endoplasmic reticulum stress, regulating ERN1/IRE1-alpha stability. Interacts with NFKBIA. Interacts with SOX9. In terms of processing, ufmylated; conjugated to ubiquitin-like protein UFM1, probably at Lys-268 by UFL1. The relevance of ufmylation is however unclear: as DDRGK1 acts as a substrate adapter for ufmylation, it is uncertain whether ufmylation is a collateral effect of the ufmylation process or whether it is required to regulate its activity. Ubiquitinated. Ubiquitination probably triggers proteasomal degradation and is negatively regulated by UFL1, the enzyme involved in the ufmylation of DDRGK1. Ubiquitously expressed. Higher expression in pancreatic islets, pancreatic acini and testis (at protein level). Highly expressed in the intestinal exocrine cells.

The protein resides in the endoplasmic reticulum membrane. Functionally, component of the UFM1 ribosome E3 ligase (UREL) complex, a multiprotein complex that catalyzes ufmylation of endoplasmic reticulum-docked proteins. The UREL complex plays a key role in ribosome recycling by mediating mono-ufmylation of the RPL26/uL24 subunit of the 60S ribosome following ribosome dissociation: ufmylation weakens the junction between post-termination 60S subunits and SEC61 translocons, promoting release and recycling of the large ribosomal subunit from the endoplasmic reticulum membrane. Ufmylation of RPL26/uL24 and subsequent 60S ribosome recycling either take place after normal termination of translation or after ribosome stalling during cotranslational translocation at the endoplasmic reticulum. Within the UREL complex, DDRGK1 tethers the complex to the endoplasmic reticulum membrane to restrict its activity to endoplasmic reticulum-docked ribosomes and acts as an ufmylation 'reader': following RPL26/uL24 ufmylation, DDRGK1 specifically binds to ufmylated RPL26/uL24 via its UFIM motif, resulting in stable association between the 60S ribosome and the UREL complex, followed by dissociation of the 60S ribosome subunit from the endoplasmic reticulum membrane. The UREL complex is also involved in reticulophagy in response to endoplasmic reticulum stress by promoting ufmylation of proteins such as CYB5R3 and RPN1, thereby promoting lysosomal degradation of ufmylated proteins. Ufmylation-dependent reticulophagy inhibits the unfolded protein response (UPR) by regulating ERN1/IRE1-alpha stability. Acts as a regulator of immunity by promoting differentiation of B-cells into plasma cells: acts by promoting expansion of the endoplasmic reticulum and regulating the unfolded protein response (UPR). May also be required for TRIP4 ufmylation. May play a role in NF-kappa-B-mediated transcription through regulation of the phosphorylation and the degradation of NFKBIA, the inhibitor of NF-kappa-B. Plays a role in cartilage development through SOX9, inhibiting the ubiquitin-mediated proteasomal degradation of this transcriptional regulator. Required for stabilization and ufmylation of ATG9A. This chain is DDRGK domain-containing protein 1, found in Mus musculus (Mouse).